The following is a 308-amino-acid chain: Methionyl-tRNA formyltransferase (308 aa).

Residue 109 to 112 (SLLP) participates in (6S)-5,6,7,8-tetrahydrofolate binding.

Belongs to the Fmt family.

It carries out the reaction L-methionyl-tRNA(fMet) + (6R)-10-formyltetrahydrofolate = N-formyl-L-methionyl-tRNA(fMet) + (6S)-5,6,7,8-tetrahydrofolate + H(+). Attaches a formyl group to the free amino group of methionyl-tRNA(fMet). The formyl group appears to play a dual role in the initiator identity of N-formylmethionyl-tRNA by promoting its recognition by IF2 and preventing the misappropriation of this tRNA by the elongation apparatus. This Methylococcus capsulatus (strain ATCC 33009 / NCIMB 11132 / Bath) protein is Methionyl-tRNA formyltransferase.